A 265-amino-acid chain; its full sequence is Tetrapyrrole-binding protein, chloroplastic (265 aa).

Residues 1-24 (MATTNSLHHHHHSSPSYTHHRNNL) form a disordered region. The transit peptide at 1 to 69 (MATTNSLHHH…TAVSAVSTTN (69 aa)) directs the protein to the chloroplast. Over residues 7–23 (LHHHHHSSPSYTHHRNN) the composition is skewed to basic residues.

Interacts with CHLH, the protoporphyrin IX-binding subunit of Mg-chelatase. Monomer or extremely compact dimer.

The protein resides in the plastid. It is found in the chloroplast membrane. Its function is as follows. Regulates chlorophyll synthesis and plastid-to-nucleus signal transduction by binding both the product and the substrate of Mg-chelatase, an enzyme that produces magnesium-protoporphyrin IX (Mg-Proto). Also activates Mg-chelatase. Neither binds abscisic acid (ABA) nor is involved in ABA signaling. The chain is Tetrapyrrole-binding protein, chloroplastic (GUN4) from Arabidopsis thaliana (Mouse-ear cress).